Here is a 431-residue protein sequence, read N- to C-terminus: Enolase (431 aa).

Gln167 is a binding site for (2R)-2-phosphoglycerate. Residue Glu209 is the Proton donor of the active site. Mg(2+)-binding residues include Asp246, Glu289, and Asp316. (2R)-2-phosphoglycerate contacts are provided by Lys341, Arg370, Ser371, and Lys392. Residue Lys341 is the Proton acceptor of the active site.

The protein belongs to the enolase family. In terms of assembly, component of the RNA degradosome, a multiprotein complex involved in RNA processing and mRNA degradation. It depends on Mg(2+) as a cofactor.

It localises to the cytoplasm. It is found in the secreted. The protein resides in the cell surface. It catalyses the reaction (2R)-2-phosphoglycerate = phosphoenolpyruvate + H2O. It participates in carbohydrate degradation; glycolysis; pyruvate from D-glyceraldehyde 3-phosphate: step 4/5. In terms of biological role, catalyzes the reversible conversion of 2-phosphoglycerate (2-PG) into phosphoenolpyruvate (PEP). It is essential for the degradation of carbohydrates via glycolysis. This is Enolase from Shewanella sp. (strain MR-4).